Consider the following 420-residue polypeptide: UDP-N-acetylglucosamine 1-carboxyvinyltransferase (420 aa).

Phosphoenolpyruvate is bound at residue 22–23 (KN). A UDP-N-acetyl-alpha-D-glucosamine-binding site is contributed by R92. The Proton donor role is filled by C116. C116 is subject to 2-(S-cysteinyl)pyruvic acid O-phosphothioketal. UDP-N-acetyl-alpha-D-glucosamine contacts are provided by residues 121-125 (RPVDQ), D304, and I326.

The protein belongs to the EPSP synthase family. MurA subfamily.

Its subcellular location is the cytoplasm. It carries out the reaction phosphoenolpyruvate + UDP-N-acetyl-alpha-D-glucosamine = UDP-N-acetyl-3-O-(1-carboxyvinyl)-alpha-D-glucosamine + phosphate. It participates in cell wall biogenesis; peptidoglycan biosynthesis. Cell wall formation. Adds enolpyruvyl to UDP-N-acetylglucosamine. In Paraburkholderia phytofirmans (strain DSM 17436 / LMG 22146 / PsJN) (Burkholderia phytofirmans), this protein is UDP-N-acetylglucosamine 1-carboxyvinyltransferase.